Here is a 1077-residue protein sequence, read N- to C-terminus: Teashirt homolog 1-B (1077 aa).

2 disordered regions span residues 1 to 110 and 142 to 179; these read MPRR…NASY and NEKA…SCTN. The span at 26-36 shows a compositional bias: acidic residues; that stretch reads TEEDNLEDDGL. Polar residues predominate over residues 56-69; sequence TQSYQNSPISSATN. A compositionally biased stretch (low complexity) spans 160 to 179; that stretch reads SGPTSDPGTPTTITSSSCTN. The segment at 248–272 adopts a C2H2-type 1 zinc-finger fold; sequence FRCKDCSAAYDTLVELTVHMNETGH. Positions 274–286 are enriched in basic and acidic residues; it reads RDDNRDREAERTK. Residues 274-300 are disordered; that stretch reads RDDNRDREAERTKRWSKPRKRSLMEME. A C2H2-type 2 zinc finger spans residues 309–333; the sequence is LKCMYCGHSFESLQDLSVHMIKTKH. Residues 362–394 are disordered; sequence ALPDSPEQAGISPGASVSESAKDPKAANPYVTP. The segment at 418–442 adopts a C2H2-type 3 zinc-finger fold; sequence LKCMECGSSHDTLQQLTAHMMVTGH. Disordered stretches follow at residues 473 to 530 and 849 to 873; these read PPTT…KIEP and GRLT…SSFE. The segment covering 497–529 has biased composition (basic and acidic residues); the sequence is HSEEKKDPEKEKVNIGEVEKKIKEENEDPEKIE. The segment covering 853-862 has biased composition (polar residues); sequence PKSSTPSTVS. Positions 885–955 form a DNA-binding region, homeobox; that stretch reads RKGRQSNWNP…NVKYQLRRTG (71 aa). 2 consecutive C2H2-type zinc fingers follow at residues 970–992 and 1037–1060; these read FFCN…LETH and FQCK…SKTH.

Belongs to the teashirt C2H2-type zinc-finger protein family.

It localises to the nucleus. Its function is as follows. Probable transcriptional regulator involved in developmental processes. May act as a transcriptional repressor (Potential). Involved in two major neuronal regionalization processes: primary anteroposterior (AP) axis patterning of the CNS and segmentation of the cranial neuronal crest (CNS) development. The chain is Teashirt homolog 1-B (tshz1-b) from Xenopus laevis (African clawed frog).